The sequence spans 1499 residues: Pleiotropic ABC efflux transporter of multiple drugs CDR1 (1499 aa).

The span at 1 to 11 (MSLASDKKDAD) shows a compositional bias: basic and acidic residues. The interval 1–29 (MSLASDKKDADVASTTTTAQDDDNLSTYH) is disordered. N24, N96, and N99 each carry an N-linked (GlcNAc...) asparagine glycan. One can recognise an ABC transporter 1 domain in the interval 146–399 (VYNTVVPSTA…FQKMGYVSPE (254 aa)). S307 carries the post-translational modification Phosphoserine. N323 carries N-linked (GlcNAc...) asparagine glycosylation. S484 is subject to Phosphoserine. The chain crosses the membrane as a helical span at residues 510-530 (GVTLFMVIGNSSMAFILGSMF). N-linked (GlcNAc...) asparagine glycosylation occurs at N537. The next 5 helical transmembrane spans lie at 548 to 568 (AMFF…FSLF), 597 to 617 (VPAK…LVNF), 622 to 642 (GVFF…SHLF), 654 to 674 (AAMV…GFAI), and 763 to 783 (GFGI…ILCE). The N-linked (GlcNAc...) asparagine glycan is linked to N813. Residues 857–1099 (FHWRNLCYDV…TMIDYFESHG (243 aa)) enclose the ABC transporter 2 domain. 893-900 (GASGAGKT) contacts ATP. The N-linked (GlcNAc...) asparagine glycan is linked to N1159. Helical transmembrane passes span 1193-1213 (YLWS…FTFF), 1228-1248 (AVFM…PSFV), and 1278-1298 (IPWN…AIGF). N-linked (GlcNAc...) asparagine glycosylation occurs at N1301. The next 2 helical transmembrane spans lie at 1314 to 1334 (LFWL…LFCI) and 1342 to 1362 (AAAN…GVLV). N1412 carries an N-linked (GlcNAc...) asparagine glycan. The chain crosses the membrane as a helical span at residues 1466–1486 (WGIFICYIAFNYIAGIFLYWL).

Belongs to the ABC transporter superfamily. In terms of processing, phosphorylated at Ser-307 and Ser-484. Ser-307 and Ser-484 are dephosphorylated on glucose depletion and independently rephosphorylated during glucose exposure or under stress.

The protein resides in the cell membrane. Inhibited by clorgyline. Inhibited by RC21v3, a 4-methoxy-2,3,6-trimethylbenzenesulphonyl derivative of the D-octapeptide D-FFKWQRRR, via the interaction with the ectodomain. FK506, enniatin, milbemycin alpha-11, and milbemycin beta-9 also inhibit CDR1 activity. Inhibited by milbemycin A3/A4 oxim derivatives. Its function is as follows. Pleiotropic ABC efflux transporter that transports and confers resistance to structurally and functionally unrelated compounds including rhodamine 6G, Nile red, caspofungin, cycloheximide, or azoles such as fluconazole, itraconazole, ketoconazole, posaconazole, voriconazole, and isavuconazole. Chlorbromuron, itraconazole, yohimbine, ketoconazole, miconazole, clotrimazole, DE-11, tamoxifen, quinidine, verapamil can compete for rhodamine 6G's binding site(s) while compounds such as propanil, chloramphenicol, benomyl, voriconazole, tritylimidazole, ketoconazole, miconazole, tamoxifen, gefitinib shared binding site(s) with fluconazole. Nile red mediated efflux appears to be relatively more specific since only five compounds such as ZW3-12, rhodamine 123, miconazole, clotrimazole, and itraconazole can inhibit its accumulation. Does not use as substrates 4-nitroquinoline 1-oxide (4-NQO) and disulfiram. Does not play a role in the azole resistance in mature biofilms. This Candida glabrata (strain ATCC 2001 / BCRC 20586 / JCM 3761 / NBRC 0622 / NRRL Y-65 / CBS 138) (Yeast) protein is Pleiotropic ABC efflux transporter of multiple drugs CDR1.